A 466-amino-acid polypeptide reads, in one-letter code: Heat stress transcription factor A-5 (466 aa).

Residues 21 to 115 (PAPFLVKTYE…LLKNIHRRKP (95 aa)) mediate DNA binding. The interval 125 to 191 (SSTDQERAVL…KLLNFLETAI (67 aa)) is hydrophobic repeat HR-A/B. The short motif at 198-217 (KNFGKKVEQLDISAYNKKRR) is the Bipartite nuclear localization signal element. 3 disordered regions span residues 215–248 (KRRL…GNIF), 272–300 (HSIQ…LTKR), and 422–466 (TERP…QLTL). The segment covering 218 to 233 (LPEVEQSKPPSEDSHL) has biased composition (basic and acidic residues). An AHA motif is present at residues 414 to 423 (DVFWEQFLTE). 2 stretches are compositionally biased toward polar residues: residues 425–438 (PGSS…STYR) and 455–466 (LRNTKNIEQLTL). The Nuclear export signal signature appears at 461–466 (IEQLTL).

Belongs to the HSF family. Class A subfamily. Homotrimer. Post-translationally, exhibits temperature-dependent phosphorylation.

The protein localises to the cytoplasm. It localises to the nucleus. Transcriptional activator that specifically binds DNA sequence 5'-AGAAnnTTCT-3' known as heat shock promoter elements (HSE). This chain is Heat stress transcription factor A-5 (HSFA5), found in Arabidopsis thaliana (Mouse-ear cress).